The primary structure comprises 88 residues: MQEVVLSLLVLLAGLPTLDANDPENKNDPFYYDWYSLRVGGLICAGILCALGIIVLMSGKCKCKFRQKPSHRPGEGPPLITPGSAHNC.

The segment at residues 1-20 (MQEVVLSLLVLLAGLPTLDA) is a signal peptide (not cleaved). Residues 1 to 38 (MQEVVLSLLVLLAGLPTLDANDPENKNDPFYYDWYSLR) are Extracellular-facing. The helical transmembrane segment at 39–59 (VGGLICAGILCALGIIVLMSG) threads the bilayer. At 60 to 88 (KCKCKFRQKPSHRPGEGPPLITPGSAHNC) the chain is on the cytoplasmic side. The disordered stretch occupies residues 67–88 (QKPSHRPGEGPPLITPGSAHNC).

The protein belongs to the FXYD family. As to quaternary structure, regulatory subunit of the sodium/potassium-transporting ATPase which is composed of a catalytic alpha subunit, a non-catalytic beta subunit and an additional regulatory subunit. Interacts with catalytic alpha subunit ATP1A1. Also interacts with non-catalytic beta subunit ATP1B1. Interacts with the ATP1A1-ATP1B1, ATP1A2-ATP1B1 and ATP1A3-ATP1B1 NKA isozymes. Post-translationally, glutathionylated. As to expression, expressed at high levels in heart, skeletal muscle and liver with low levels of expression in breast, brain, lung, stomach and colon. In the gastric gland, mainly expressed in the mucus cells forming the upper part of the gland and is absent from the parietal cells.

Its subcellular location is the cell membrane. In terms of biological role, associates with and regulates the activity of the sodium/potassium-transporting ATPase (NKA) which transports Na(+) out of the cell and K(+) into the cell. Reduces glutathionylation of the NKA beta-1 subunit ATP1B1, thus reversing glutathionylation-mediated inhibition of ATP1B1. Induces a hyperpolarization-activated chloride current when expressed in Xenopus oocytes. The protein is FXYD domain-containing ion transport regulator 3 (Fxyd3) of Mus musculus (Mouse).